We begin with the raw amino-acid sequence, 150 residues long: Ribosome maturation factor RimP (150 aa).

The protein belongs to the RimP family.

It localises to the cytoplasm. Its function is as follows. Required for maturation of 30S ribosomal subunits. The sequence is that of Ribosome maturation factor RimP from Escherichia coli O9:H4 (strain HS).